Here is a 141-residue protein sequence, read N- to C-terminus: Arsenate reductase (141 aa).

Catalysis depends on C12, which acts as the Nucleophile; cysteine thioarsenate intermediate.

The protein belongs to the ArsC family.

The catalysed reaction is [glutaredoxin]-dithiol + arsenate + glutathione + H(+) = glutathionyl-S-S-[glutaredoxin] + arsenite + H2O. Involved in resistance to arsenate. Catalyzes the reduction of arsenate [As(V)] to arsenite [As(III)]. The chain is Arsenate reductase from Escherichia coli.